The chain runs to 338 residues: D-erythrose-4-phosphate dehydrogenase (338 aa).

12–13 (RI) contributes to the NAD(+) binding site. Residues 154-156 (SCT), arginine 200, 213-214 (TK), and arginine 236 each bind substrate. The active-site Nucleophile is the cysteine 155. Position 318 (asparagine 318) interacts with NAD(+).

This sequence belongs to the glyceraldehyde-3-phosphate dehydrogenase family. Epd subfamily. As to quaternary structure, homotetramer.

It localises to the cytoplasm. It catalyses the reaction D-erythrose 4-phosphate + NAD(+) + H2O = 4-phospho-D-erythronate + NADH + 2 H(+). It participates in cofactor biosynthesis; pyridoxine 5'-phosphate biosynthesis; pyridoxine 5'-phosphate from D-erythrose 4-phosphate: step 1/5. Catalyzes the NAD-dependent conversion of D-erythrose 4-phosphate to 4-phosphoerythronate. This is D-erythrose-4-phosphate dehydrogenase from Yersinia pestis bv. Antiqua (strain Antiqua).